Here is a 120-residue protein sequence, read N- to C-terminus: NAD(P)H-quinone oxidoreductase subunit 3 (120 aa).

The next 3 helical transmembrane spans lie at 6 to 26, 64 to 84, and 89 to 109; these read GYDA…LALV, MFAL…PWAV, and LGLL…VALA.

Belongs to the complex I subunit 3 family. As to quaternary structure, NDH-1 can be composed of about 15 different subunits; different subcomplexes with different compositions have been identified which probably have different functions.

It is found in the cellular thylakoid membrane. It catalyses the reaction a plastoquinone + NADH + (n+1) H(+)(in) = a plastoquinol + NAD(+) + n H(+)(out). The enzyme catalyses a plastoquinone + NADPH + (n+1) H(+)(in) = a plastoquinol + NADP(+) + n H(+)(out). In terms of biological role, NDH-1 shuttles electrons from an unknown electron donor, via FMN and iron-sulfur (Fe-S) centers, to quinones in the respiratory and/or the photosynthetic chain. The immediate electron acceptor for the enzyme in this species is believed to be plastoquinone. Couples the redox reaction to proton translocation, and thus conserves the redox energy in a proton gradient. Cyanobacterial NDH-1 also plays a role in inorganic carbon-concentration. This Prochlorococcus marinus (strain MIT 9313) protein is NAD(P)H-quinone oxidoreductase subunit 3.